A 158-amino-acid polypeptide reads, in one-letter code: Transcription elongation factor GreA (158 aa).

It belongs to the GreA/GreB family.

Functionally, necessary for efficient RNA polymerase transcription elongation past template-encoded arresting sites. The arresting sites in DNA have the property of trapping a certain fraction of elongating RNA polymerases that pass through, resulting in locked ternary complexes. Cleavage of the nascent transcript by cleavage factors such as GreA or GreB allows the resumption of elongation from the new 3'terminus. GreA releases sequences of 2 to 3 nucleotides. In Hamiltonella defensa subsp. Acyrthosiphon pisum (strain 5AT), this protein is Transcription elongation factor GreA.